The chain runs to 546 residues: EH domain-containing protein 2 (546 aa).

EF-hand domains lie at 15 to 50 and 51 to 84; these read EHQKIYKEWFNIADSDGDGRVSGNDATKFFAMSKLS and RQELKQVWAVADSKRQGFLGLSEFITAMKLVSLA. The region spanning 16-94 is the EH domain; the sequence is HQKIYKEWFN…QEGHEITSDL (79 aa). D28, D30, D32, R34, D39, D62, and E73 together coordinate Ca(2+). The Dynamin-type G domain occupies 194-430; sequence FDAKPMVMLL…LLADLMDVPK (237 aa). Residues 204-211 form a G1 motif region; the sequence is GQYSTGKT. 204-211 provides a ligand contact to GTP; it reads GQYSTGKT. A G2 motif region spans residues 230–231; it reads EP. The segment at 292–295 is G3 motif; it reads DTPG. GTP contacts are provided by residues 292-296 and K359; that span reads DTPGV. Positions 358–361 are G4 motif; sequence NKAD. A region of interest (G5 motif) is located at residue V382. Residue 395 to 398 participates in GTP binding; the sequence is SFND. The Nuclear localization signal signature appears at 429–436; the sequence is PKKACDRK. Positions 467–490 form a coiled coil; it reads KSKAQQRLMDNLEEEFGKVQREFH.

The protein belongs to the TRAFAC class dynamin-like GTPase superfamily. Dynamin/Fzo/YdjA family. EHD subfamily. Homooligomer, and heterooligomer with EHD1. Interacts with AP-4 complex subunit sigma (At2g19790).

It localises to the endosome membrane. The protein resides in the cell membrane. The protein localises to the nucleus. It is found in the cytoplasm. It carries out the reaction GTP + H2O = GDP + phosphate + H(+). Involved in endocytosis negative regulation, probably by influencing actin organization. Acts in early endocytic membrane fusion and membrane trafficking of recycling endosomes. Exhibits an inhibitory effect on endocytosis when over-expressed. The chain is EH domain-containing protein 2 from Arabidopsis thaliana (Mouse-ear cress).